Here is a 517-residue protein sequence, read N- to C-terminus: Sphingolipid C9-methyltransferase A (517 aa).

The next 2 helical transmembrane spans lie at 58–78 (LLIL…GGGL) and 80–100 (TTIF…WSIA). Residues 223-224 (YT), 286-291 (TLGRNQ), and 316-317 (YR) each bind S-adenosyl-L-methionine. N290 carries N-linked (GlcNAc...) asparagine glycosylation. N478 is a glycosylation site (N-linked (GlcNAc...) asparagine).

It belongs to the CFA/CMAS family.

The protein resides in the membrane. It carries out the reaction a (4E,8E)-4-sphinga-4,8-dienine ceramide + S-adenosyl-L-methionine = a 9-methyl-(4E,8E)-sphinga-4,8-dienine ceramide + S-adenosyl-L-homocysteine + H(+). Its pathway is lipid metabolism; sphingolipid metabolism. Functionally, catalyzes methylation of the sphingoid base component of glucosylceramides (GluCers) at the C9-position. Sphingolipid C9-methylation requires 4,8-desaturated ceramides as substrates. Glucosylceramides play important roles in growth, differentiation and pathogenicity. The methyl group at the C9-position distinguishes fungal glucosylceramides from those of plants and animals and may thus play a role in host-pathogen interactions enabling the host to recognize the fungal attack and initiate specific defense responses. This is Sphingolipid C9-methyltransferase A from Emericella nidulans (strain FGSC A4 / ATCC 38163 / CBS 112.46 / NRRL 194 / M139) (Aspergillus nidulans).